The chain runs to 450 residues: UDP-N-acetylglucosamine--peptide N-acetylglucosaminyltransferase stabilizing protein GtfB (450 aa).

This sequence belongs to the GtfB family. Forms a heterotetramer with 2 subunits each of GtfA and GtfB. Part of the accessory SecA2/SecY2 protein translocation apparatus required to export cell wall protein GspB.

It localises to the cell membrane. The protein operates within protein modification; protein glycosylation. In terms of biological role, required for polymorphic O-glycosylation of GspB, a serine-rich repeat cell wall protein encoded upstream in the same operon. A substrate-binding protein that is part of the accessory SecA2/SecY2 system specifically required to export GspB. The GtfA-GtfB complex adds GlcNAc from UDP-GlcNAc to GspB, attaching the first sugar residue. Upon coexpression in E.coli with GtfA glycosylates GspB constructs. Binds the GspB protein substrate; alone this subunit only recognizes partially glycosylated GspB, but is constrained by GtfA to also recognize unglycosylated protein. The enzyme probably modifies its tertiary conformation by opening and closing its intersubunit interfaces to accomodate the increasingly glycosylated substrate. This is UDP-N-acetylglucosamine--peptide N-acetylglucosaminyltransferase stabilizing protein GtfB from Streptococcus gordonii.